A 430-amino-acid chain; its full sequence is Enolase (430 aa).

A (2R)-2-phosphoglycerate-binding site is contributed by Gln-166. Glu-208 serves as the catalytic Proton donor. Residues Asp-245, Glu-288, and Asp-315 each coordinate Mg(2+). 4 residues coordinate (2R)-2-phosphoglycerate: Lys-340, Arg-369, Ser-370, and Lys-391. Lys-340 acts as the Proton acceptor in catalysis.

This sequence belongs to the enolase family. Mg(2+) is required as a cofactor.

It is found in the cytoplasm. Its subcellular location is the secreted. It localises to the cell surface. The catalysed reaction is (2R)-2-phosphoglycerate = phosphoenolpyruvate + H2O. It participates in carbohydrate degradation; glycolysis; pyruvate from D-glyceraldehyde 3-phosphate: step 4/5. Its function is as follows. Catalyzes the reversible conversion of 2-phosphoglycerate (2-PG) into phosphoenolpyruvate (PEP). It is essential for the degradation of carbohydrates via glycolysis. This chain is Enolase, found in Clostridium beijerinckii (strain ATCC 51743 / NCIMB 8052) (Clostridium acetobutylicum).